The sequence spans 139 residues: Putative nickel-responsive regulator (139 aa).

Ni(2+)-binding residues include His-79, His-90, His-92, and Cys-98.

The protein belongs to the transcriptional regulatory CopG/NikR family. Ni(2+) serves as cofactor.

Its function is as follows. Transcriptional regulator. This Solibacter usitatus (strain Ellin6076) protein is Putative nickel-responsive regulator.